Consider the following 207-residue polypeptide: 2,3-bisphosphoglycerate-dependent phosphoglycerate mutase (207 aa).

Substrate contacts are provided by residues Arg-10 to Asn-17, Thr-23 to Gly-24, Arg-62, Glu-89 to Tyr-92, Lys-100, Arg-116 to Arg-117, and Gly-160 to Asn-161. Residue His-11 is the Tele-phosphohistidine intermediate of the active site. Glu-89 functions as the Proton donor/acceptor in the catalytic mechanism.

Belongs to the phosphoglycerate mutase family. BPG-dependent PGAM subfamily. In terms of assembly, homodimer.

The enzyme catalyses (2R)-2-phosphoglycerate = (2R)-3-phosphoglycerate. It participates in carbohydrate degradation; glycolysis; pyruvate from D-glyceraldehyde 3-phosphate: step 3/5. Functionally, catalyzes the interconversion of 2-phosphoglycerate and 3-phosphoglycerate. The sequence is that of 2,3-bisphosphoglycerate-dependent phosphoglycerate mutase from Bradyrhizobium diazoefficiens (strain JCM 10833 / BCRC 13528 / IAM 13628 / NBRC 14792 / USDA 110).